The sequence spans 105 residues: Large ribosomal subunit protein uL24 (105 aa).

Belongs to the universal ribosomal protein uL24 family. As to quaternary structure, part of the 50S ribosomal subunit.

In terms of biological role, one of two assembly initiator proteins, it binds directly to the 5'-end of the 23S rRNA, where it nucleates assembly of the 50S subunit. One of the proteins that surrounds the polypeptide exit tunnel on the outside of the subunit. The polypeptide is Large ribosomal subunit protein uL24 (Thermotoga maritima (strain ATCC 43589 / DSM 3109 / JCM 10099 / NBRC 100826 / MSB8)).